The sequence spans 251 residues: Adenosylcobinamide-GDP ribazoletransferase (251 aa).

The next 6 membrane-spanning stretches (helical) occupy residues 36–56, 60–80, 110–130, 181–201, 202–222, and 231–251; these read LYPFIGLIIGILWYLSFFVLS, VPIMLMAALILTVPYILTGFL, VGAFSVISVVLLLLVEFAGIF, EIILLGIYVLVALITFFTLGI, NYLIAILAMGLISFILLLKVK, and DVAGYILVLMEFTGILLLGII.

The protein belongs to the CobS family. Mg(2+) is required as a cofactor.

It localises to the cell membrane. The enzyme catalyses alpha-ribazole + adenosylcob(III)inamide-GDP = adenosylcob(III)alamin + GMP + H(+). It catalyses the reaction alpha-ribazole 5'-phosphate + adenosylcob(III)inamide-GDP = adenosylcob(III)alamin 5'-phosphate + GMP + H(+). It participates in cofactor biosynthesis; adenosylcobalamin biosynthesis; adenosylcobalamin from cob(II)yrinate a,c-diamide: step 7/7. Its function is as follows. Joins adenosylcobinamide-GDP and alpha-ribazole to generate adenosylcobalamin (Ado-cobalamin). Also synthesizes adenosylcobalamin 5'-phosphate from adenosylcobinamide-GDP and alpha-ribazole 5'-phosphate. The protein is Adenosylcobinamide-GDP ribazoletransferase of Clostridium perfringens (strain SM101 / Type A).